The sequence spans 154 residues: Transcription antitermination protein NusB (154 aa).

Belongs to the NusB family.

Functionally, involved in transcription antitermination. Required for transcription of ribosomal RNA (rRNA) genes. Binds specifically to the boxA antiterminator sequence of the ribosomal RNA (rrn) operons. The sequence is that of Transcription antitermination protein NusB from Hyphomonas neptunium (strain ATCC 15444).